Reading from the N-terminus, the 220-residue chain is UPF0502 protein CV_4303 (220 aa).

Belongs to the UPF0502 family.

The protein is UPF0502 protein CV_4303 of Chromobacterium violaceum (strain ATCC 12472 / DSM 30191 / JCM 1249 / CCUG 213 / NBRC 12614 / NCIMB 9131 / NCTC 9757 / MK).